The sequence spans 415 residues: Phosphoglycerate transport system transcriptional regulatory protein PgtA (415 aa).

Residues 7–121 (SILLIDDDVD…KLLILIEDAL (115 aa)) enclose the Response regulatory domain. Asp-56 bears the 4-aspartylphosphate mark. Positions 142–341 (LIGRSEWMNQ…LANAAELFAV (200 aa)) constitute a Sigma-54 factor interaction domain. 170–177 (GEHGTGRM) contacts ATP. The H-T-H motif DNA-binding region spans 385 to 404 (INEVAEYLQIPRKKLYLRMK).

In terms of processing, phosphorylated by PgtB.

The protein resides in the cytoplasm. Member of the two-component regulatory system PgtB/PgtA that regulates the inducible phosphoglycerate transport system. When activated by PgtB it acts in conjunction with sigma-54 as a transcriptional activator. This Salmonella typhimurium (strain LT2 / SGSC1412 / ATCC 700720) protein is Phosphoglycerate transport system transcriptional regulatory protein PgtA (pgtA).